Reading from the N-terminus, the 278-residue chain is Indole-3-glycerol phosphate synthase (278 aa).

The protein belongs to the TrpC family.

It carries out the reaction 1-(2-carboxyphenylamino)-1-deoxy-D-ribulose 5-phosphate + H(+) = (1S,2R)-1-C-(indol-3-yl)glycerol 3-phosphate + CO2 + H2O. It participates in amino-acid biosynthesis; L-tryptophan biosynthesis; L-tryptophan from chorismate: step 4/5. The polypeptide is Indole-3-glycerol phosphate synthase (Stutzerimonas stutzeri (strain A1501) (Pseudomonas stutzeri)).